Consider the following 396-residue polypeptide: Beta-peptidyl aminopeptidase BapA (396 aa).

A signal peptide spans 1-21 (MHYLKFPAIIAGMLLAGAASA). Serine 271 functions as the Nucleophile in the catalytic mechanism. Catalysis depends on proton donor/acceptor residues serine 309 and aspartate 311.

Belongs to the peptidase S58 family. As to quaternary structure, heterooctamer of 4 heterodimers ((alpha:beta)4); each heterodimer is composed of an alpha subunit and a beta subunit processed from the same precursor. Autoproteolytic processing to generate the alpha and beta subunit is required for self-activation and is proposed to use a similar mechanism as substrate cleavage.

The protein localises to the periplasm. It catalyses the reaction Cleaves N-terminal beta-homoamino acids from peptides composed of 2 to 6 amino acids.. Inhibited by AEBSF (4-(2-aminoethyl)benzenesulfonyl fluoride, Pefabloc SC). Beta-aminopeptidase that can cleave synthetic beta-peptides which consist of backbone-elongated beta-amino acid residues that are not processed by common proteolytic enzymes. Can cleave the beta-peptides beta-homoVal-beta-homoAla-beta-homoLeu and beta-homoAla-beta-homoLeu. Requires a beta-amino acid at the N-terminus of peptide substrates and cleaves the peptide bond between the N-terminal beta-amino acid and the amino acid at the second position of tripeptidic substrates of the general structure H-betahXaa-Ile-betahTyr-OH according to the following preferences with regard to the side chain of the N-terminal beta-amino acid: aliphatic and aromatic &gt; OH-containing &gt; hydrogen, basic and polar. beta-homoVal-beta-homoAla-beta-homoLeu and beta-homoAla-beta-homoLeu. The polypeptide is Beta-peptidyl aminopeptidase BapA (Sphingosinicella microcystinivorans).